The chain runs to 800 residues: Putative antiporter subunit mnhA2 (800 aa).

Transmembrane regions (helical) follow at residues 1-21 (MSLV…LLMS), 33-53 (IALV…PSVA), 78-98 (GLSL…FFYA), 118-138 (LFMF…MYIF), 167-187 (FMIT…LYIM), 207-227 (GLFI…SAQF), 241-261 (TPVS…FLLL), 273-293 (YVYI…ITAL), 300-320 (GILA…VGIG), 331-351 (IASI…NHAI), 387-407 (LVMT…GFLS), 424-444 (FSLI…VFTF), 472-492 (PWLF…IFFV), 527-547 (GFNI…VLAI), 595-615 (IIMT…RIGL), 627-647 (GALE…LIFI), 651-671 (LTMV…FIAM), 676-696 (LALT…VSFS), 712-732 (IIKI…IFIT), and 768-788 (LDTL…YTLL).

It belongs to the CPA3 antiporters (TC 2.A.63) subunit A family. As to quaternary structure, may form a heterooligomeric complex that consists of seven subunits: mnhA2, mnhB2, mnhC2, mnhD2, mnhE2, mnhF2 and mnhG2.

Its subcellular location is the cell membrane. In Staphylococcus aureus (strain USA300), this protein is Putative antiporter subunit mnhA2 (mnhA2).